Here is a 336-residue protein sequence, read N- to C-terminus: Holliday junction branch migration complex subunit RuvB (336 aa).

Residues 4-184 are large ATPase domain (RuvB-L); sequence ADRLISAGTT…FGIVQRLEFY (181 aa). Residues isoleucine 23, arginine 24, glycine 65, lysine 68, threonine 69, threonine 70, 131–133, arginine 174, tyrosine 184, and arginine 221 each bind ATP; that span reads EDY. Threonine 69 contacts Mg(2+). The interval 185 to 255 is small ATPAse domain (RuvB-S); the sequence is QVPDLQYIVS…IAAQALDMLN (71 aa). Residues 258-336 form a head domain (RuvB-H) region; it reads AEGFDYMDRK…HFGITPPEMP (79 aa). DNA is bound by residues arginine 294, arginine 313, and arginine 318.

This sequence belongs to the RuvB family. In terms of assembly, homohexamer. Forms an RuvA(8)-RuvB(12)-Holliday junction (HJ) complex. HJ DNA is sandwiched between 2 RuvA tetramers; dsDNA enters through RuvA and exits via RuvB. An RuvB hexamer assembles on each DNA strand where it exits the tetramer. Each RuvB hexamer is contacted by two RuvA subunits (via domain III) on 2 adjacent RuvB subunits; this complex drives branch migration. In the full resolvosome a probable DNA-RuvA(4)-RuvB(12)-RuvC(2) complex forms which resolves the HJ.

It localises to the cytoplasm. The enzyme catalyses ATP + H2O = ADP + phosphate + H(+). In terms of biological role, the RuvA-RuvB-RuvC complex processes Holliday junction (HJ) DNA during genetic recombination and DNA repair, while the RuvA-RuvB complex plays an important role in the rescue of blocked DNA replication forks via replication fork reversal (RFR). RuvA specifically binds to HJ cruciform DNA, conferring on it an open structure. The RuvB hexamer acts as an ATP-dependent pump, pulling dsDNA into and through the RuvAB complex. RuvB forms 2 homohexamers on either side of HJ DNA bound by 1 or 2 RuvA tetramers; 4 subunits per hexamer contact DNA at a time. Coordinated motions by a converter formed by DNA-disengaged RuvB subunits stimulates ATP hydrolysis and nucleotide exchange. Immobilization of the converter enables RuvB to convert the ATP-contained energy into a lever motion, pulling 2 nucleotides of DNA out of the RuvA tetramer per ATP hydrolyzed, thus driving DNA branch migration. The RuvB motors rotate together with the DNA substrate, which together with the progressing nucleotide cycle form the mechanistic basis for DNA recombination by continuous HJ branch migration. Branch migration allows RuvC to scan DNA until it finds its consensus sequence, where it cleaves and resolves cruciform DNA. The protein is Holliday junction branch migration complex subunit RuvB of Escherichia coli (strain ATCC 8739 / DSM 1576 / NBRC 3972 / NCIMB 8545 / WDCM 00012 / Crooks).